Here is a 79-residue protein sequence, read N- to C-terminus: Omega-phylotoxin-To1a (79 aa).

The first 21 residues, 1-21, serve as a signal peptide directing secretion; the sequence is MKKTFCFILILVCIVLKSVNA. Residues 22–38 constitute a propeptide that is removed on maturation; it reads EEEDNFEESSLEMETAR. 4 cysteine pairs are disulfide-bonded: Cys39-Cys59, Cys46-Cys63, Cys58-Cys78, and Cys65-Cys76.

Expressed by the venom duct.

The protein localises to the secreted. Its function is as follows. Insect-specific toxin that probably acts as an inhibitor of presynaptic insect calcium channels, presumably Cav2 subtype. In vivo, induces immediate paralysis on insects, followed by death when high doses are injected. The chain is Omega-phylotoxin-To1a from Tibellus oblongus (Oblong running crab spider).